The following is a 131-amino-acid chain: Thioredoxin H4-1 (131 aa).

In terms of domain architecture, Thioredoxin spans 3 to 129; sequence SCVGKERSDE…LEKKVAALAD (127 aa). Catalysis depends on nucleophile residues Cys-55 and Cys-58. An intrachain disulfide couples Cys-55 to Cys-58.

It belongs to the thioredoxin family. Plant H-type subfamily.

It localises to the cytoplasm. Functionally, probable thiol-disulfide oxidoreductase that may be involved in the redox regulation of a number of cytosolic enzymes. This is Thioredoxin H4-1 from Oryza sativa subsp. japonica (Rice).